Here is a 446-residue protein sequence, read N- to C-terminus: RUN domain-containing protein 3A (446 aa).

The interval 1–298 (MEASFVQTTM…LQLQLEEAAA (298 aa)) is interaction with RAP2A. In terms of domain architecture, RUN spans 52 to 189 (DDSSEEFVNF…IDFSFCLKGE (138 aa)). Position 215 is a phosphothreonine (threonine 215). The segment at 216-239 (DEEERHSAESSTSEDNSPEHPYLP) is disordered. The residue at position 232 (serine 232) is a Phosphoserine. Residues 267–322 (YLEELVRLRESQLKDLEAENRRLQLQLEEAAAQNQREKRELEGVILELQEQLTGLI) adopt a coiled-coil conformation. The segment covering 372 to 384 (PLSAEASLSSDSQ) has biased composition (polar residues). The interval 372-403 (PLSAEASLSSDSQRLGEAKRDEEPWGPIGKDP) is disordered. The segment covering 385-394 (RLGEAKRDEE) has biased composition (basic and acidic residues). A phosphoserine mark is found at serine 416 and serine 419.

The protein belongs to the RUNDC3 family. As to quaternary structure, interacts with the GTP-bound form of RAP2A. In terms of tissue distribution, brain.

Its function is as follows. May act as an effector of RAP2A in neuronal cells. The polypeptide is RUN domain-containing protein 3A (Rundc3a) (Mus musculus (Mouse)).